A 198-amino-acid chain; its full sequence is Recombination protein RecR (198 aa).

The segment at 57–72 adopts a C4-type zinc-finger fold; sequence CSICGNITEEDPCEIC. One can recognise a Toprim domain in the interval 80-175; the sequence is SIILVVEEPK…TVTRLAHGLS (96 aa).

Belongs to the RecR family.

Functionally, may play a role in DNA repair. It seems to be involved in an RecBC-independent recombinational process of DNA repair. It may act with RecF and RecO. This chain is Recombination protein RecR, found in Enterococcus faecalis (strain ATCC 700802 / V583).